The sequence spans 1707 residues: Histone-lysine N-methyltransferase SETD1A (1707 aa).

The segment at 60–89 is interaction with WDR82; it reads LQDPRCHVRSKNRDFSLPVPKFKLDEFYIG. The region spanning 84–172 is the RRM domain; sequence DEFYIGQIPL…NIIHAQLDIK (89 aa). Disordered stretches follow at residues 194-308, 331-363, 381-486, 506-655, 834-854, 891-1251, and 1264-1293; these read PTGG…YQDA, TAAT…RSSD, SYPP…AQHS, LASD…PPPH, AKPF…EKTK, PSFK…GTEV, and ARRG…RPLL. A compositionally biased stretch (polar residues) spans 239 to 277; sequence NGTPCSQDTSFSSSRQDTPSSFGQFTPQSSQGTPYTSRG. Composition is skewed to low complexity over residues 278-295 and 331-357; these read STPY…TSTS and TAAT…SSSS. The span at 430 to 440 shows a compositional bias: pro residues; it reads SEAPPPEPPEP. A phosphoserine mark is found at S459 and S464. Residues 459–473 are compositionally biased toward low complexity; it reads SPRPASPARSGSPAP. Over residues 474–486 the composition is skewed to polar residues; the sequence is ETTNESVPFAQHS. Phosphoserine occurs at positions 508 and 565. Residues 568-578 are compositionally biased toward polar residues; it reads ANGQNQASPCS. Composition is skewed to pro residues over residues 593–617 and 624–655; these read SPPP…PPPY and GYPP…PPPH. The segment covering 844–854 has biased composition (basic and acidic residues); sequence QAKEEDKEKTK. Phosphoserine is present on S915. Acidic residues-rich tracts occupy residues 918 to 927 and 976 to 992; these read AEEDEDDPEQ and KDEE…DREE. The span at 993-1002 shows a compositional bias: basic and acidic residues; it reads AVDTTKKETE. Over residues 1003–1012 the composition is skewed to acidic residues; it reads VSDGEDEESD. The segment covering 1032 to 1060 has biased composition (low complexity); it reads DSESSSSSSSSSSSSSSSSSSSSSSSSES. Over residues 1077–1094 the composition is skewed to pro residues; that stretch reads ASPPPREVPVPTPAPVEV. Position 1103 is a phosphoserine (S1103). Residues 1127 to 1145 are compositionally biased toward pro residues; it reads PSAPLRPPEPPAGPPAPAP. Residues 1275–1284 show a composition bias toward acidic residues; it reads EDSEATETSD. The HCFC1-binding motif (HBM) signature appears at 1299–1303; it reads EHNYA. Disordered regions lie at residues 1307–1417 and 1472–1499; these read KPTP…AYEP and NLTT…SEGY. The span at 1308-1323 shows a compositional bias: pro residues; that stretch reads PTPPAPALRPPEPVPA. A compositionally biased stretch (acidic residues) spans 1360 to 1377; it reads EGEEEGEEEGEEEEEESS. Residues 1390 to 1403 are compositionally biased toward basic residues; it reads RRRSLRSHARRRRP. Residues 1404–1414 show a composition bias toward pro residues; it reads PPPPPPPPPRA. Positions 1415–1450 are interaction with CFP1; that stretch reads YEPRSEFEQMTILYDIWNSGLDSEDMSYLRLTYERL. The tract at residues 1450–1537 is interaction with ASH2L, RBBP5 and WDR5; the sequence is LLQQTSGADW…GTNRVLSERR (88 aa). The WDR5 interaction motif (WIN) signature appears at 1492 to 1497; sequence GSARSE. The RxxxRR motif motif lies at 1537-1542; sequence RSEQRR. The SET domain maps to 1568–1685; sequence KKLRFGRSRI…VDEEITYDYK (118 aa). Y1684 provides a ligand contact to S-adenosyl-L-methionine. Residues 1691-1707 enclose the Post-SET domain; the sequence is NKIPCLCGTESCRGSLN.

This sequence belongs to the class V-like SAM-binding methyltransferase superfamily. Component of the SET1A/COMPASS complex composed of the catalytic subunit SETD1A, WDR5, WDR82, RBBP5, ASH2L/ASH2, CXXC1/CFP1, HCFC1 and DPY30 homotrimer. Forms a core complex with the evolutionary conserved subcomplex WRAD composed of WDR5, RBBP5, ASH2L/ASH2 and DPY30 subunits; WRAD differentially stimulates the methyltransferase activity. Interacts with BOD1L1 (via COMPASS-Shg1 domain) at replication forks. Interacts with HCFC1. Interacts with ASH2/ASH2L. Interacts with CXXC1/CFP1. Interacts with RBBP5. Interacts (via N-terminal region) with WDR82; the interaction is direct. Interacts (via the RRM domain) with hyperphosphorylated C-terminal domain (CTD) of RNA polymerase II large subunit (POLR2A) only in the presence of WDR82. Binds specifically to CTD heptad repeats phosphorylated on 'Ser-5' of each heptad. Interacts with ZNF335. Interacts with SUPT6H. Interacts with NAP1L1. Interacts (via WIN motif) with WDR5.

The protein resides in the nucleus speckle. It localises to the chromosome. The protein localises to the cytoplasm. It catalyses the reaction L-lysyl(4)-[histone H3] + S-adenosyl-L-methionine = N(6)-methyl-L-lysyl(4)-[histone H3] + S-adenosyl-L-homocysteine + H(+). The enzyme catalyses N(6)-methyl-L-lysyl(4)-[histone H3] + S-adenosyl-L-methionine = N(6),N(6)-dimethyl-L-lysyl(4)-[histone H3] + S-adenosyl-L-homocysteine + H(+). The catalysed reaction is N(6),N(6)-dimethyl-L-lysyl(4)-[histone H3] + S-adenosyl-L-methionine = N(6),N(6),N(6)-trimethyl-L-lysyl(4)-[histone H3] + S-adenosyl-L-homocysteine + H(+). Functionally, histone methyltransferase that catalyzes methyl group transfer from S-adenosyl-L-methionine to the epsilon-amino group of 'Lys-4' of histone H3 (H3K4) via a non-processive mechanism. Part of chromatin remodeling machinery, forms H3K4me1, H3K4me2 and H3K4me3 methylation marks at active chromatin sites where transcription and DNA repair take place. Responsible for H3K4me3 enriched promoters and transcriptional programming of inner mass stem cells and neuron progenitors during embryogenesis. Required for H3K4me1 mark at stalled replication forks. Mediates FANCD2-dependent nucleosome remodeling and RAD51 nucleofilaments stabilization at reversed forks, protecting them from nucleolytic degradation. Does not methylate 'Lys-4' of histone H3 if the neighboring 'Lys-9' residue is already methylated. Binds RNAs involved in RNA processing and the DNA damage response. The chain is Histone-lysine N-methyltransferase SETD1A (SETD1A) from Homo sapiens (Human).